We begin with the raw amino-acid sequence, 439 residues long: Enolase 2 (439 aa).

Residues His-160 and Glu-169 each contribute to the substrate site. The active-site Proton donor is Glu-212. Positions 247, 296, and 323 each coordinate Mg(2+). Substrate contacts are provided by Glu-296 and Asp-323. Lys-348 serves as the catalytic Proton acceptor. Substrate contacts are provided by residues 375-378 (SHRS) and Lys-399.

This sequence belongs to the enolase family. In terms of assembly, homodimer. The cofactor is Mg(2+).

Its subcellular location is the cytoplasm. It carries out the reaction (2R)-2-phosphoglycerate = phosphoenolpyruvate + H2O. It participates in carbohydrate degradation; glycolysis; pyruvate from D-glyceraldehyde 3-phosphate: step 4/5. The sequence is that of Enolase 2 (ENO2) from Debaryomyces hansenii (strain ATCC 36239 / CBS 767 / BCRC 21394 / JCM 1990 / NBRC 0083 / IGC 2968) (Yeast).